We begin with the raw amino-acid sequence, 451 residues long: Target of rapamycin complex 1 subunit tco89 (451 aa).

Positions 1–35 are disordered; sequence MERPSLSRRTSSSTVSTDGEGVYSRSTKERKRNFI. Positions 7–17 are enriched in low complexity; it reads SRRTSSSTVST. A Phosphoserine modification is found at serine 70. Disordered stretches follow at residues 122 to 164, 176 to 264, and 362 to 437; these read WDDA…PVTR, INSN…GNSL, and NQNF…DTDY. Over residues 129-162 the composition is skewed to polar residues; sequence NDSTAGNLDSDSALPTPSVTTNEAADSSRASSPV. Positions 203–215 are enriched in low complexity; sequence DDSAADASTTKSS. Polar residues-rich tracts occupy residues 228 to 242, 362 to 376, and 407 to 417; these read HSNN…NQPK, NQNF…TSAA, and QSASLNASMSA. Over residues 419-430 the composition is skewed to basic residues; the sequence is SHARQRSIHVPK.

Belongs to the TORC subunit TCO89 family. The target of rapamycin complex 1 (TORC1) is composed of at least mip1, pop3/wat1, tco89, toc1 and tor2. Either Thr-10, Ser-11, Ser-12, Ser-13 or Thr-14 and Ser-214 or Ser-215 and Ser-247 or Ser-249 are phosphorylated as well.

It is found in the cytoplasm. Functionally, component of TORC1, which regulates multiple cellular processes to control cell growth in response to environmental signals. Tor2 is essential for growth. Nutrient limitation and environmental stress signals cause inactivation of TORC1. Active TORC1 positively controls cell growth and ribosome biogenesis by regulating ribosomal protein gene expression. TORC1 negatively controls G1 cell-cycle arrest, sexual development and amino acid uptake. Represses mating, meiosis and sporulation efficiency by interfering with the functions of the transcription factor ste11 and the meiosis-promoting RNA-binding protein mei2. The sequence is that of Target of rapamycin complex 1 subunit tco89 from Schizosaccharomyces pombe (strain 972 / ATCC 24843) (Fission yeast).